Here is a 223-residue protein sequence, read N- to C-terminus: Uracil-DNA glycosylase (223 aa).

Catalysis depends on D61, which acts as the Proton acceptor.

This sequence belongs to the uracil-DNA glycosylase (UDG) superfamily. UNG family.

It localises to the cytoplasm. The enzyme catalyses Hydrolyzes single-stranded DNA or mismatched double-stranded DNA and polynucleotides, releasing free uracil.. Excises uracil residues from the DNA which can arise as a result of misincorporation of dUMP residues by DNA polymerase or due to deamination of cytosine. This is Uracil-DNA glycosylase from Haemophilus ducreyi (strain 35000HP / ATCC 700724).